A 352-amino-acid chain; its full sequence is Photosystem II D2 protein (352 aa).

A helical membrane pass occupies residues 40 to 60 (CAYLALGGWLTGTTFVTSWYT). His-117 contributes to the chlorophyll a binding site. A helical membrane pass occupies residues 124–140 (GFMLRQFEIAQSVRLRP). 2 residues coordinate pheophytin a: Gln-129 and Asn-142. The chain crosses the membrane as a helical span at residues 152–165 (VFVSVFLIYPLGQS). His-197 is a chlorophyll a binding site. The helical transmembrane segment at 207–227 (AALLCAIHGATVENTLFEDGD) threads the bilayer. Positions 214 and 261 each coordinate a plastoquinone. His-214 serves as a coordination point for Fe cation. His-268 contributes to the Fe cation binding site. Residues 278–294 (GLWMSALGVVGLALNLR) form a helical membrane-spanning segment.

Belongs to the reaction center PufL/M/PsbA/D family. PSII is composed of 1 copy each of membrane proteins PsbA, PsbB, PsbC, PsbD, PsbE, PsbF, PsbH, PsbI, PsbJ, PsbK, PsbL, PsbM, PsbT, PsbY, PsbZ, Psb30/Ycf12, at least 3 peripheral proteins of the oxygen-evolving complex and a large number of cofactors. It forms dimeric complexes. The D1/D2 heterodimer binds P680, chlorophylls that are the primary electron donor of PSII, and subsequent electron acceptors. It shares a non-heme iron and each subunit binds pheophytin, quinone, additional chlorophylls, carotenoids and lipids. There is also a Cl(-1) ion associated with D1 and D2, which is required for oxygen evolution. The PSII complex binds additional chlorophylls, carotenoids and specific lipids. serves as cofactor.

The protein localises to the plastid. The protein resides in the chloroplast thylakoid membrane. It carries out the reaction 2 a plastoquinone + 4 hnu + 2 H2O = 2 a plastoquinol + O2. Photosystem II (PSII) is a light-driven water:plastoquinone oxidoreductase that uses light energy to abstract electrons from H(2)O, generating O(2) and a proton gradient subsequently used for ATP formation. It consists of a core antenna complex that captures photons, and an electron transfer chain that converts photonic excitation into a charge separation. The D1/D2 (PsbA/PsbD) reaction center heterodimer binds P680, the primary electron donor of PSII as well as several subsequent electron acceptors. D2 is needed for assembly of a stable PSII complex. This is Photosystem II D2 protein from Bigelowiella natans (Pedinomonas minutissima).